A 248-amino-acid polypeptide reads, in one-letter code: Large ribosomal subunit protein uL4 (248 aa).

Disordered stretches follow at residues 72-103 and 173-210; these read RSEN…KSLN and GRSV…RNLS. Positions 92–103 are enriched in basic and acidic residues; sequence PKAEKDQTKSLN. Over residues 177–189 the composition is skewed to basic residues; that stretch reads RAGRGKTRGRKYS.

This sequence belongs to the universal ribosomal protein uL4 family. As to quaternary structure, part of the 50S ribosomal subunit.

Its function is as follows. One of the primary rRNA binding proteins, this protein initially binds near the 5'-end of the 23S rRNA. It is important during the early stages of 50S assembly. It makes multiple contacts with different domains of the 23S rRNA in the assembled 50S subunit and ribosome. In terms of biological role, forms part of the polypeptide exit tunnel. This Halorubrum lacusprofundi (strain ATCC 49239 / DSM 5036 / JCM 8891 / ACAM 34) protein is Large ribosomal subunit protein uL4.